We begin with the raw amino-acid sequence, 110 residues long: Mobility group protein 1B (110 aa).

Residues 5-71 constitute a DNA-binding region (HMG box); the sequence is PKRPLSAYML…NYIRALQEYE (67 aa). The segment covering 71-81 has biased composition (basic and acidic residues); the sequence is ERNGGGGDDKG. The disordered stretch occupies residues 71–110; the sequence is ERNGGGGDDKGKKRKGAAPKKGAGKKSKKGAHSDDDGDSE. Residues 82 to 100 are compositionally biased toward basic residues; sequence KKRKGAAPKKGAGKKSKKG.

It belongs to the HMGB family.

It localises to the nucleus. The protein resides in the chromosome. Functionally, found in condensed chromomeres. Binds preferentially to AT-rich DNA. The sequence is that of Mobility group protein 1B (HMG1B) from Chironomus tentans (Midge).